The chain runs to 303 residues: UDP-3-O-acyl-N-acetylglucosamine deacetylase (303 aa).

Zn(2+) is bound by residues His-78, His-237, and Asp-241. His-264 (proton donor) is an active-site residue.

Belongs to the LpxC family. Zn(2+) is required as a cofactor.

It catalyses the reaction a UDP-3-O-[(3R)-3-hydroxyacyl]-N-acetyl-alpha-D-glucosamine + H2O = a UDP-3-O-[(3R)-3-hydroxyacyl]-alpha-D-glucosamine + acetate. The protein operates within glycolipid biosynthesis; lipid IV(A) biosynthesis; lipid IV(A) from (3R)-3-hydroxytetradecanoyl-[acyl-carrier-protein] and UDP-N-acetyl-alpha-D-glucosamine: step 2/6. Its function is as follows. Catalyzes the hydrolysis of UDP-3-O-myristoyl-N-acetylglucosamine to form UDP-3-O-myristoylglucosamine and acetate, the committed step in lipid A biosynthesis. The chain is UDP-3-O-acyl-N-acetylglucosamine deacetylase from Xanthomonas oryzae pv. oryzae (strain MAFF 311018).